A 78-amino-acid chain; its full sequence is Large ribosomal subunit protein bL28 (78 aa).

This sequence belongs to the bacterial ribosomal protein bL28 family.

The polypeptide is Large ribosomal subunit protein bL28 (Acaryochloris marina (strain MBIC 11017)).